The primary structure comprises 68 residues: Amphipathic peptide VmCT1 (68 aa).

Residues 1–23 form the signal peptide; sequence MKTQFVILIVAVVLLQLISHSEA. Phenylalanine 36 carries the phenylalanine amide modification. Positions 40 to 68 are excised as a propeptide; sequence GLRNFDDLDDTFEPEMSEADLKYLQDLLR.

Belongs to the non-disulfide-bridged peptide (NDBP) superfamily. Short antimicrobial peptide (group 4) family. In terms of tissue distribution, expressed by the venom gland.

It localises to the secreted. Its subcellular location is the target cell membrane. In terms of biological role, cationic amphipathic peptide with antibacterial activities against both Gram-positive and Gram-negative bacteria. Also shows antifungal activities. Is mildly hemolytic against human erythrocytes. In addition, when tested in vitro on the parasite Trypanosoma cruzi (responsible of the Chagas disease), is able to reduce the number of the three forms (epimastigote, trypomastigote and amastigote). Also shows antiplasmodial and cytotoxic activity (tested on Plasmodium gallinaceum, and MCF-7 breast cancer cell line). This chain is Amphipathic peptide VmCT1, found in Vaejovis mexicanus smithi (Mexican scorpion).